Consider the following 391-residue polypeptide: UPF0229 protein CA_C0580 (391 aa).

Disordered regions lie at residues 1–20 and 75–109; these read MAIFRDYSINPTEHDRTIGD and VGSGTGNEKKGDIIGKEQMGNGSKGKGKGAGNSEG. Positions 96-106 are enriched in gly residues; the sequence is GSKGKGKGAGN.

This sequence belongs to the UPF0229 family.

This chain is UPF0229 protein CA_C0580, found in Clostridium acetobutylicum (strain ATCC 824 / DSM 792 / JCM 1419 / IAM 19013 / LMG 5710 / NBRC 13948 / NRRL B-527 / VKM B-1787 / 2291 / W).